A 645-amino-acid chain; its full sequence is UPF0313 protein CLM_0251 (645 aa).

One can recognise a Radical SAM core domain in the interval 295-566 (AIKEVKFSIT…RMQRALLQFS (272 aa)). [4Fe-4S] cluster contacts are provided by C309, C313, and C316. Residues 598–645 (NKPYKKSHKKNNAKNNNNHYNKNNNYNKNKDISKKNKKNSLSKHKKRK) are disordered. Basic residues predominate over residues 600 to 609 (PYKKSHKKNN). Low complexity predominate over residues 610–624 (AKNNNNHYNKNNNYN). The span at 632 to 645 (KNKKNSLSKHKKRK) shows a compositional bias: basic residues.

The protein belongs to the UPF0313 family. [4Fe-4S] cluster is required as a cofactor.

In Clostridium botulinum (strain Kyoto / Type A2), this protein is UPF0313 protein CLM_0251.